The primary structure comprises 312 residues: DNA-directed RNA polymerase subunit alpha (312 aa).

An alpha N-terminal domain (alpha-NTD) region spans residues 1–226 (MIEFEKPIIT…EHLNLFTDLT (226 aa)). An alpha C-terminal domain (alpha-CTD) region spans residues 243–312 (DEKVLDRTIE…DLGLGLKNDK (70 aa)).

It belongs to the RNA polymerase alpha chain family. Homodimer. The RNAP catalytic core consists of 2 alpha, 1 beta, 1 beta' and 1 omega subunit. When a sigma factor is associated with the core the holoenzyme is formed, which can initiate transcription.

The catalysed reaction is RNA(n) + a ribonucleoside 5'-triphosphate = RNA(n+1) + diphosphate. Its function is as follows. DNA-dependent RNA polymerase catalyzes the transcription of DNA into RNA using the four ribonucleoside triphosphates as substrates. The polypeptide is DNA-directed RNA polymerase subunit alpha (Streptococcus pyogenes serotype M1).